Reading from the N-terminus, the 95-residue chain is Putative RelE-like toxin protein (95 aa).

The protein belongs to the RelE toxin family.

In terms of biological role, toxic component of a type II toxin-antitoxin (TA) system. The sequence is that of Putative RelE-like toxin protein from Escherichia coli.